We begin with the raw amino-acid sequence, 188 residues long: Cell division protein SepF (188 aa).

A disordered region spans residues 29 to 53 (EQQDQDQRATQADGGALATLGDSNP).

It belongs to the SepF family. In terms of assembly, homodimer. Interacts with FtsZ.

It localises to the cytoplasm. Cell division protein that is part of the divisome complex and is recruited early to the Z-ring. Probably stimulates Z-ring formation, perhaps through the cross-linking of FtsZ protofilaments. Its function overlaps with FtsA. The polypeptide is Cell division protein SepF (Synechococcus sp. (strain CC9902)).